The following is a 316-amino-acid chain: MRVVFAGTPEVAIPVLDAVAASSHELVAVVTRPDAPAGRGRRLLASPVALRAEELGVPVLKPAHPKDPEFQEQLRALRPDCCPVVAYGALLPQAALDIPVHGWVNLHFSALPAWRGAAPVQHAIWAGDEVTGATTFRIVKELDAGPTYGVMTERIRPTDTAGDLLARLAEGGAGLMVATLDGIEDGSLEARPQQAEGVSYAPKVEVEDARVDWSRPAVVIDHQVRACTPAPGAWTTVAGERLKLGPVTHADAHGSQGLGPGELGVGKHDVLVGTGTTAVRLGDVRPHGRKQMAAADWARGARLQTGVRIGVAFGES.

109–112 (SALP) is a binding site for (6S)-5,6,7,8-tetrahydrofolate.

It belongs to the Fmt family.

It carries out the reaction L-methionyl-tRNA(fMet) + (6R)-10-formyltetrahydrofolate = N-formyl-L-methionyl-tRNA(fMet) + (6S)-5,6,7,8-tetrahydrofolate + H(+). In terms of biological role, attaches a formyl group to the free amino group of methionyl-tRNA(fMet). The formyl group appears to play a dual role in the initiator identity of N-formylmethionyl-tRNA by promoting its recognition by IF2 and preventing the misappropriation of this tRNA by the elongation apparatus. The polypeptide is Methionyl-tRNA formyltransferase (Nocardioides sp. (strain ATCC BAA-499 / JS614)).